Here is a 101-residue protein sequence, read N- to C-terminus: Small ribosomal subunit protein uS14 (101 aa).

Belongs to the universal ribosomal protein uS14 family. Part of the 30S ribosomal subunit. Contacts proteins S3 and S10.

In terms of biological role, binds 16S rRNA, required for the assembly of 30S particles and may also be responsible for determining the conformation of the 16S rRNA at the A site. This Gluconacetobacter diazotrophicus (strain ATCC 49037 / DSM 5601 / CCUG 37298 / CIP 103539 / LMG 7603 / PAl5) protein is Small ribosomal subunit protein uS14.